The chain runs to 1364 residues: Pleckstrin homology domain-containing family H member 1 (1364 aa).

Residues 28–169 (FRLQASKIRE…VGSLQDALEA (142 aa)) are a coiled coil. 5 disordered regions span residues 184–266 (GAAE…SPPH), 296–321 (GTKT…PGTP), 356–395 (LHPS…ESPK), 487–529 (PFMD…IKRG), and 546–568 (DACS…SSYS). A compositionally biased stretch (polar residues) spans 237-246 (EDSSSSTVHS). Positions 364–379 (LESRARSREEPEKMEM) are enriched in basic and acidic residues. Positions 509–520 (VPSSESRKTSGL) are enriched in polar residues. 2 consecutive PH domains span residues 578–672 (SLEK…SLLK) and 687–796 (KPTV…VAAG). Position 745 is a phosphoserine (serine 745). One can recognise a MyTH4 domain in the interval 832–986 (YSKDGLYASL…PSRMEVVSIL (155 aa)). The FERM domain maps to 997–1333 (FSIPVHFTNG…NHCTTTVNPP (337 aa)).

This is Pleckstrin homology domain-containing family H member 1 (PLEKHH1) from Homo sapiens (Human).